The sequence spans 764 residues: G-type lectin S-receptor-like serine/threonine-protein kinase SD3-1 (764 aa).

Residues 1–24 (MKMLRALLLCLSLVFFLAFQIVVS) form the signal peptide. Bulb-type lectin domains are found at residues 25–151 (EIQL…QSFG) and 154–279 (TDTL…WKPV). The Extracellular segment spans residues 25 to 442 (EIQLGSKLVV…TKSHSICIPC (418 aa)). N-linked (GlcNAc...) asparagine glycosylation is found at asparagine 92, asparagine 198, and asparagine 248. The 38-residue stretch at 283–320 (VENQCRVFATCGSQVCSFNSSGYTECNCPFNAFVSVSD) folds into the EGF-like; atypical domain. 5 disulfide bridges follow: cysteine 287/cysteine 298, cysteine 293/cysteine 308, cysteine 332/cysteine 413, cysteine 365/cysteine 388, and cysteine 369/cysteine 375. N-linked (GlcNAc...) asparagine glycans are attached at residues asparagine 301 and asparagine 353. An Apple domain is found at 332 to 413 (CKSGFNMVKF…LSSISYVKTC (82 aa)). The N-linked (GlcNAc...) asparagine glycan is linked to asparagine 423. A helical membrane pass occupies residues 443–463 (LVGATSTTLVLFLGFQLGIVV). Over 464–764 (YIYRRKKKLA…SESSQSLYEP (301 aa)) the chain is Cytoplasmic. The region spanning 466 to 764 (YRRKKKLAKK…SESSQSLYEP (299 aa)) is the Protein kinase domain. ATP is bound by residues 508–516 (IGPQIFKGV) and lysine 526. The caM-binding stretch occupies residues 586-603 (LRSKKLTWRIRTDTCLSV). The interval 738-764 (DPPPPPFACARSSPTNSSESSQSLYEP) is disordered. Positions 749 to 764 (SSPTNSSESSQSLYEP) are enriched in low complexity.

It localises to the cell membrane. The enzyme catalyses L-seryl-[protein] + ATP = O-phospho-L-seryl-[protein] + ADP + H(+). The catalysed reaction is L-threonyl-[protein] + ATP = O-phospho-L-threonyl-[protein] + ADP + H(+). The protein is G-type lectin S-receptor-like serine/threonine-protein kinase SD3-1 (SD31) of Arabidopsis thaliana (Mouse-ear cress).